The chain runs to 552 residues: Dihydroxy-acid dehydratase (552 aa).

Asp78 provides a ligand contact to Mg(2+). Cys119 serves as a coordination point for [2Fe-2S] cluster. Positions 120 and 121 each coordinate Mg(2+). At Lys121 the chain carries N6-carboxylysine. A [2Fe-2S] cluster-binding site is contributed by Cys191. Residue Glu442 participates in Mg(2+) binding. The Proton acceptor role is filled by Ser468.

Belongs to the IlvD/Edd family. In terms of assembly, homodimer. Requires [2Fe-2S] cluster as cofactor. Mg(2+) is required as a cofactor.

The catalysed reaction is (2R)-2,3-dihydroxy-3-methylbutanoate = 3-methyl-2-oxobutanoate + H2O. The enzyme catalyses (2R,3R)-2,3-dihydroxy-3-methylpentanoate = (S)-3-methyl-2-oxopentanoate + H2O. It functions in the pathway amino-acid biosynthesis; L-isoleucine biosynthesis; L-isoleucine from 2-oxobutanoate: step 3/4. It participates in amino-acid biosynthesis; L-valine biosynthesis; L-valine from pyruvate: step 3/4. Functionally, functions in the biosynthesis of branched-chain amino acids. Catalyzes the dehydration of (2R,3R)-2,3-dihydroxy-3-methylpentanoate (2,3-dihydroxy-3-methylvalerate) into 2-oxo-3-methylpentanoate (2-oxo-3-methylvalerate) and of (2R)-2,3-dihydroxy-3-methylbutanoate (2,3-dihydroxyisovalerate) into 2-oxo-3-methylbutanoate (2-oxoisovalerate), the penultimate precursor to L-isoleucine and L-valine, respectively. This Caldicellulosiruptor bescii (strain ATCC BAA-1888 / DSM 6725 / KCTC 15123 / Z-1320) (Anaerocellum thermophilum) protein is Dihydroxy-acid dehydratase.